Reading from the N-terminus, the 341-residue chain is Phenylalanine--tRNA ligase alpha subunit (341 aa).

Residue E254 participates in Mg(2+) binding.

This sequence belongs to the class-II aminoacyl-tRNA synthetase family. Phe-tRNA synthetase alpha subunit type 1 subfamily. Tetramer of two alpha and two beta subunits. Mg(2+) is required as a cofactor.

It is found in the cytoplasm. The catalysed reaction is tRNA(Phe) + L-phenylalanine + ATP = L-phenylalanyl-tRNA(Phe) + AMP + diphosphate + H(+). The protein is Phenylalanine--tRNA ligase alpha subunit of Chlorobaculum tepidum (strain ATCC 49652 / DSM 12025 / NBRC 103806 / TLS) (Chlorobium tepidum).